The sequence spans 340 residues: MTEASLNEAATAAITAFDGADNLEELAALRRDHLGDNAPIPQARRSLGTIPKDQRKDAGRFVNMALGRVEKHFAQVKAQLEEKRNREVLEQERVDVTVPTTRTQVGALHPITILNEQIADIFVGMGWEVAEGPEVEAEYFNFDALNFLPDHPARTLQDTFHIGPEGSRQVLRTHTSPVQIRSMLDREVPIYIACPGRVFRTDELDATHTPVFHQIEGLAVDKGLTMAHLRGTLDHLARELFGPETKTRMRSNYFPFTEPSAEVDVWFPNKKGGAGWIEWGGCGMVNPNVLRAVGIDPEEYSGFAFGMGIERTLQFRNGLSDMRDMVEGDVRFTLPFGIQA.

Glu258 is a Mg(2+) binding site.

The protein belongs to the class-II aminoacyl-tRNA synthetase family. Phe-tRNA synthetase alpha subunit type 1 subfamily. As to quaternary structure, tetramer of two alpha and two beta subunits. The cofactor is Mg(2+).

It is found in the cytoplasm. The enzyme catalyses tRNA(Phe) + L-phenylalanine + ATP = L-phenylalanyl-tRNA(Phe) + AMP + diphosphate + H(+). This is Phenylalanine--tRNA ligase alpha subunit from Corynebacterium efficiens (strain DSM 44549 / YS-314 / AJ 12310 / JCM 11189 / NBRC 100395).